Here is a 335-residue protein sequence, read N- to C-terminus: 3-hydroxyproline 2-epimerase (335 aa).

Cysteine 91 acts as the Proton acceptor in catalysis. Substrate is bound by residues 92–93 (GH), aspartate 251, and 256–257 (GS).

It belongs to the proline racemase family.

The catalysed reaction is trans-3-hydroxy-L-proline = cis-3-hydroxy-D-proline. It carries out the reaction trans-4-hydroxy-L-proline = cis-4-hydroxy-D-proline. In terms of biological role, catalyzes the epimerization of trans-3-hydroxy-L-proline (t3LHyp) to cis-3-hydroxy-D-proline (c3DHyp) in vitro. Can also catalyze the epimerization of trans-4-hydroxy-L-proline (t3LHyp) to cis-4-hydroxy-D-proline (c4DHyp), albeit with 3.6-fold lower efficiency. Displays no proline racemase activity. In Burkholderia multivorans (strain ATCC 17616 / 249), this protein is 3-hydroxyproline 2-epimerase.